The following is a 375-amino-acid chain: Methylthioribose-1-phosphate isomerase (375 aa).

Substrate-binding positions include 53-55 (RGA), R90, and Q202. Residue D243 is the Proton donor of the active site. Residue 253 to 254 (NK) participates in substrate binding.

The protein belongs to the eIF-2B alpha/beta/delta subunits family. MtnA subfamily.

It catalyses the reaction 5-(methylsulfanyl)-alpha-D-ribose 1-phosphate = 5-(methylsulfanyl)-D-ribulose 1-phosphate. It participates in amino-acid biosynthesis; L-methionine biosynthesis via salvage pathway; L-methionine from S-methyl-5-thio-alpha-D-ribose 1-phosphate: step 1/6. Catalyzes the interconversion of methylthioribose-1-phosphate (MTR-1-P) into methylthioribulose-1-phosphate (MTRu-1-P). The polypeptide is Methylthioribose-1-phosphate isomerase (Rhodospirillum centenum (strain ATCC 51521 / SW)).